The sequence spans 179 residues: Peptide deformylase (179 aa).

Positions 102 and 144 each coordinate Fe cation. The active site involves E145. H148 contacts Fe cation.

Belongs to the polypeptide deformylase family. Requires Fe(2+) as cofactor.

The enzyme catalyses N-terminal N-formyl-L-methionyl-[peptide] + H2O = N-terminal L-methionyl-[peptide] + formate. Its function is as follows. Removes the formyl group from the N-terminal Met of newly synthesized proteins. Requires at least a dipeptide for an efficient rate of reaction. N-terminal L-methionine is a prerequisite for activity but the enzyme has broad specificity at other positions. The sequence is that of Peptide deformylase from Wolbachia sp. subsp. Brugia malayi (strain TRS).